The sequence spans 333 residues: MRIAVDAMGGDHAPKAVIDGVIKGIEAFDDLHITLVGDKTTIESHLTTTSDRITVLHADEVIEPTDEPVRAVRRKKNSSMVLMAQEVAENRADACISAGNTGALMTAGLFIVGRIKGIDRPALAPTLPTVSGDGFLLLDVGANVDAKPEHLVQYAIMGSVYSQQVRGVTSPRVGLLNVGTEDKKGNELTKQTFQILKETANINFIGNVEARDLLDDVADVVVTDGFTGNVTLKTLEGSALSIFKMMRDVMTSTLTSKLAAAVLKPKLKEMKMKMEYSNYGGASLFGLKAPVIKAHGSSDSNAVFHAIRQAREMVSQNVAALIQEEVKEEKTDE.

The protein belongs to the PlsX family. In terms of assembly, homodimer. Probably interacts with PlsY.

It localises to the cytoplasm. It catalyses the reaction a fatty acyl-[ACP] + phosphate = an acyl phosphate + holo-[ACP]. Its pathway is lipid metabolism; phospholipid metabolism. In terms of biological role, catalyzes the reversible formation of acyl-phosphate (acyl-PO(4)) from acyl-[acyl-carrier-protein] (acyl-ACP). This enzyme utilizes acyl-ACP as fatty acyl donor, but not acyl-CoA. This Bacillus subtilis (strain 168) protein is Phosphate acyltransferase.